Consider the following 456-residue polypeptide: Ammonium transporter Amt2 (456 aa).

A run of 11 helical transmembrane segments spans residues 18–38, 61–81, 109–129, 141–161, 170–190, 211–231, 255–275, 281–301, 304–324, 339–359, and 377–397; these read LVWVLTVTFLIFFMHAGFAML, IGVIVFFLLGAAVSAIVAGLT, WLFGAVFAMTAATIVSGAVAG, ILIAGVIYPVVVGVTWAGGFL, AGGMIVHGMGGIAGLTAAWII, ITFAVLGTLILAFGWYGFNVG, VALVTTLGMAAGALGAGGVAF, VDTLYVANGVLAGLVGITAIA, IVWPGALVVGLLAGAQLPIVF, VFPVHGSAGVLGTLLYPVFAV, and VGVGVIAVWTFVATTAIFGGF.

Belongs to the ammonia transporter channel (TC 1.A.11.2) family. In terms of assembly, homotrimer. Interacts with both GlnK1 and GlnK2 after ammonium shock.

Its subcellular location is the cell membrane. Its function is as follows. Involved in the uptake of ammonium/ammonia (NH(4)(+)/NH(3)). Transport is electrogenic. This is Ammonium transporter Amt2 from Haloferax mediterranei (strain ATCC 33500 / DSM 1411 / JCM 8866 / NBRC 14739 / NCIMB 2177 / R-4) (Halobacterium mediterranei).